Consider the following 207-residue polypeptide: High frequency lysogenization protein HflD homolog (207 aa).

It belongs to the HflD family.

The protein localises to the cytoplasm. It localises to the cell inner membrane. In Tolumonas auensis (strain DSM 9187 / NBRC 110442 / TA 4), this protein is High frequency lysogenization protein HflD homolog.